The chain runs to 1379 residues: Vascular endothelial growth factor receptor 3 (1379 aa).

The first 19 residues, 1–19 (MKRVCTLPLWLWLGIVSEA), serve as a signal peptide directing secretion. Residues 20–788 (DLVSSYSMTP…EGSDDKTNVE (769 aa)) are Extracellular-facing. Ig-like C2-type domains lie at 30–136 (PTLS…TAVS), 160–222 (KENT…IDNK), 240–335 (DIQL…TDVI), 340–421 (PFIN…KRIS), 430–566 (PRIH…FYVT), 569–684 (PDGF…KYIS), and 691–777 (PRLK…ASVS). Disulfide bonds link Cys51–Cys120 and Cys167–Cys215. A disordered region spans residues 73-93 (RRWNSQPQQRPVGAGNPEEDC). Residues Asn113, Asn175, Asn260, and Asn308 are each glycosylated (N-linked (GlcNAc...) asparagine). Cys261 and Cys319 form a disulfide bridge. 3 cysteine pairs are disulfide-bonded: Cys453-Cys548, Cys474-Cys500, and Cys592-Cys666. Residues Asn529, Asn541, Asn596, Asn608, Asn655, Asn696, and Asn703 are each glycosylated (N-linked (GlcNAc...) asparagine). Residues Cys712 and Cys761 are joined by a disulfide bond. Residue Asn771 is glycosylated (N-linked (GlcNAc...) asparagine). Residues 789–809 (IVILIGTGVIAVFFWILLIII) traverse the membrane as a helical segment. At 810–1379 (FCNIKRPAHA…LHASFFSEQY (570 aa)) the chain is on the cytoplasmic side. Positions 858-1185 (LRLGKVLGHG…DLVEILGNLL (328 aa)) constitute a Protein kinase domain. Residues 864–872 (LGHGAFGKV) and Lys892 each bind ATP. Asp1049 (proton acceptor) is an active-site residue. Phosphotyrosine; by autocatalysis is present on residues Tyr1075 and Tyr1080. The segment at 1196 to 1224 (YIPLNDSHSSEDDGFSQVPSSAQQNSDEE) is disordered. Phosphotyrosine; by autocatalysis is present on residues Tyr1239, Tyr1240, Tyr1274, Tyr1342, and Tyr1346. The interval 1299-1379 (RHRKEGGFSS…LHASFFSEQY (81 aa)) is disordered. Residues 1332–1343 (YGSQVGGQTFYN) show a composition bias toward polar residues.

It belongs to the protein kinase superfamily. Tyr protein kinase family. CSF-1/PDGF receptor subfamily. In terms of assembly, interacts with VEGFC and VEGFD. Monomer in the absence of bound VEGFC or VEGFD. Homodimer in the presence of bound VEGFC or VEGFD. In terms of processing, autophosphorylated on tyrosine residues upon ligand binding. Autophosphorylation occurs in trans, i.e. one subunit of the dimeric receptor phosphorylates tyrosine residues on the other subunit.

The protein localises to the cell membrane. It is found in the cytoplasm. It localises to the nucleus. The enzyme catalyses L-tyrosyl-[protein] + ATP = O-phospho-L-tyrosyl-[protein] + ADP + H(+). With respect to regulation, present in an inactive conformation in the absence of bound ligand. Binding of VEGFC or VEGFD leads to dimerization and activation by autophosphorylation on tyrosine residues. Its function is as follows. Tyrosine-protein kinase that acts as a cell-surface receptor for VEGFC and VEGFD, and plays an essential role in lymphangiogenesis and in the development of the vascular network and the cardiovascular system during embryonic development. Promotes proliferation, survival and migration of endothelial cells, and regulates angiogenic sprouting. Mediates activation of the MAPK1/ERK2, MAPK3/ERK1 signaling pathway, of MAPK8 and the JUN signaling pathway, and of the AKT1 signaling pathway. The chain is Vascular endothelial growth factor receptor 3 (FLT4) from Coturnix coturnix (Common quail).